We begin with the raw amino-acid sequence, 662 residues long: Transmembrane 9 superfamily member 2 (662 aa).

A signal peptide spans 1-28; it reads MSSRPPASPPAQGSRLLLLSLLLLGTVP. Topologically, residues 29 to 299 are lumenal; the sequence is GPRPGSAFYL…LESMPHTHIQ (271 aa). Residues 300–320 form a helical membrane-spanning segment; it reads WFSIMNSLVIVLFLSGMVAMI. The Cytoplasmic portion of the chain corresponds to 321 to 373; that stretch reads MLRTLHKDIARYNQMDSTEDAQEEFGWKLVHGDIFRPPRKGMLLSVFLGSGTQ. The chain crosses the membrane as a helical span at residues 374-394; it reads ILIMTFVTLFFACLGFLSPAN. Topologically, residues 395–397 are lumenal; that stretch reads RGA. The chain crosses the membrane as a helical span at residues 398–418; sequence LMTCAVVLWVLLGTPAGYVAA. The Cytoplasmic segment spans residues 419–436; the sequence is RFYKSFGGEKWKTNVLLT. Residues 437–457 traverse the membrane as a helical segment; that stretch reads SFLCPGIVFADFFIMNLILWG. The Lumenal segment spans residues 458–465; the sequence is EGSSAAIP. The helical transmembrane segment at 466–486 threads the bilayer; that stretch reads FGTLVAILALWFCISVPLTFI. The Cytoplasmic segment spans residues 487–521; sequence GAYFGFKKNAIEHPVRTNQIPRQIPEQSFYTKPLP. The chain crosses the membrane as a helical span at residues 522–542; that stretch reads GIIMGGILPFGCIFIQLFFIL. Topologically, residues 543–553 are lumenal; that stretch reads NSIWSHQMYYM. A helical transmembrane segment spans residues 554-574; the sequence is FGFLFLVFIILVITCSEATIL. The Cytoplasmic portion of the chain corresponds to 575 to 590; the sequence is LCYFHLCAEDYHWQWR. Residues 591–611 traverse the membrane as a helical segment; the sequence is SFLTSGFTAVYFLIYAIHYFF. Residues 612-630 are Lumenal-facing; the sequence is SKLQITGTASTILYFGYTM. The helical transmembrane segment at 631–651 threads the bilayer; that stretch reads IMVLIFFLFTGTIGFFACFWF. The Cytoplasmic segment spans residues 652–662; it reads VTKIYSVVKVD.

This sequence belongs to the nonaspanin (TM9SF) (TC 9.A.2) family.

The protein localises to the endosome membrane. It localises to the golgi outpost. The protein resides in the cytoplasm. It is found in the cytoskeleton. Its subcellular location is the microtubule organizing center. Functionally, in the intracellular compartments, may function as a channel or small molecule transporter. This Mus musculus (Mouse) protein is Transmembrane 9 superfamily member 2 (Tm9sf2).